The primary structure comprises 325 residues: Tetraacyldisaccharide 4'-kinase (325 aa).

Thr-55–Thr-62 contributes to the ATP binding site.

It belongs to the LpxK family.

It carries out the reaction a lipid A disaccharide + ATP = a lipid IVA + ADP + H(+). It participates in glycolipid biosynthesis; lipid IV(A) biosynthesis; lipid IV(A) from (3R)-3-hydroxytetradecanoyl-[acyl-carrier-protein] and UDP-N-acetyl-alpha-D-glucosamine: step 6/6. Its function is as follows. Transfers the gamma-phosphate of ATP to the 4'-position of a tetraacyldisaccharide 1-phosphate intermediate (termed DS-1-P) to form tetraacyldisaccharide 1,4'-bis-phosphate (lipid IVA). In Salmonella choleraesuis (strain SC-B67), this protein is Tetraacyldisaccharide 4'-kinase.